The chain runs to 322 residues: FAD-dependent monooxygenase subE (322 aa).

E35, G49, R108, and D313 together coordinate FAD.

Belongs to the paxM FAD-dependent monooxygenase family. It depends on FAD as a cofactor.

It participates in secondary metabolite biosynthesis; terpenoid biosynthesis. FAD-dependent monooxygenase; part of the gene cluster that mediates the biosynthesis of the immunosuppressants subglutinols, meroterpenoids consisting of an alpha-pyrone (4-hydroxy-5,6-dimethyl-2-pyrone) moiety attached to a decalin core fused to a five-membered cyclic ether carrying a prenylside chain. The first step of the pathway is the synthesis of the alpha-pyrone moiety by the polyketide synthase subA via condensation of one acetyl-CoA starter unit with 3 malonyl-CoA units and 2 methylations. The alpha-pyrone is then combined with geranylgeranyl pyrophosphate (GGPP) formed by the GGPP synthase subD through the action of the prenyltransferase subC to yield a linear alpha-pyrone diterpenoid. Subsequent steps in the subglutinol biosynthetic pathway involve the decalin core formation, which is thought to be initiated by the epoxidation of the C10-C11 olefin by the FAD-dependent oxidoreductase subE. The following cyclization cascade would be catalyzed by the terpene cyclase subB. Lastly, the FAD-dependent dehydrogenase subF probably catalyzes the five-membered cyclic ether formation to complete the formation of subglutinol A. Subsequent redox reactions appear to give rise to subglutinol C and D, however, it remains unclear which enzymes are responsible for these transformations. SubD may have secondary function in the conversion of the identified subglutinols to subglutinol analog 45, which seems to be the major product of the cluster. The polypeptide is FAD-dependent monooxygenase subE (Metarhizium robertsii (strain ARSEF 23 / ATCC MYA-3075) (Metarhizium anisopliae (strain ARSEF 23))).